We begin with the raw amino-acid sequence, 457 residues long: Argininosuccinate lyase (457 aa).

It belongs to the lyase 1 family. Argininosuccinate lyase subfamily.

Its subcellular location is the cytoplasm. It carries out the reaction 2-(N(omega)-L-arginino)succinate = fumarate + L-arginine. Its pathway is amino-acid biosynthesis; L-arginine biosynthesis; L-arginine from L-ornithine and carbamoyl phosphate: step 3/3. This Sodalis glossinidius (strain morsitans) protein is Argininosuccinate lyase.